The following is a 111-amino-acid chain: C-type lectin lectoxin-Enh1 (111 aa).

A signal peptide spans 1 to 23; that stretch reads MGQFTVVSLGLLAMFLSLSGAKG. A disulfide bond links Cys-26 and Cys-37. The region spanning 33–108 is the C-type lectin domain; sequence RNGVCNKLFP…CASLHPFICQ (76 aa). The Mannose-binding motif lies at 72 to 74; it reads EPN. 3 residues coordinate Ca(2+): Glu-80, Asn-95, and Asp-96. A disulfide bond links Cys-82 and Cys-99.

This sequence belongs to the true venom lectin family. Expressed by the venom gland.

It is found in the secreted. Its function is as follows. Mannose-binding lectin which recognizes specific carbohydrate structures and agglutinates a variety of animal cells by binding to cell-surface glycoproteins and glycolipids. May be a calcium-dependent lectin. The sequence is that of C-type lectin lectoxin-Enh1 from Pseudoferania polylepis (Macleay's water snake).